The chain runs to 502 residues: ATP synthase subunit alpha (502 aa).

169–176 lines the ATP pocket; the sequence is GDRQTGKT.

This sequence belongs to the ATPase alpha/beta chains family. In terms of assembly, F-type ATPases have 2 components, CF(1) - the catalytic core - and CF(0) - the membrane proton channel. CF(1) has five subunits: alpha(3), beta(3), gamma(1), delta(1), epsilon(1). CF(0) has three main subunits: a(1), b(2) and c(9-12). The alpha and beta chains form an alternating ring which encloses part of the gamma chain. CF(1) is attached to CF(0) by a central stalk formed by the gamma and epsilon chains, while a peripheral stalk is formed by the delta and b chains.

The protein resides in the cell inner membrane. The catalysed reaction is ATP + H2O + 4 H(+)(in) = ADP + phosphate + 5 H(+)(out). In terms of biological role, produces ATP from ADP in the presence of a proton gradient across the membrane. The alpha chain is a regulatory subunit. This Pelobacter propionicus (strain DSM 2379 / NBRC 103807 / OttBd1) protein is ATP synthase subunit alpha.